A 432-amino-acid polypeptide reads, in one-letter code: Polypyrimidine tract-binding protein homolog 3 (432 aa).

RRM domains follow at residues 6-80, 98-187, 245-319, and 355-429; these read KVVH…FSSH, NRIL…YNND, CTVL…FSKH, and KMIH…FSQL.

The protein localises to the nucleus. In terms of biological role, plays a role in pre-mRNA splicing. Binds to the polypyrimidine tract of introns. May promote the binding of U2 snRNP to pre-mRNA. The polypeptide is Polypyrimidine tract-binding protein homolog 3 (Arabidopsis thaliana (Mouse-ear cress)).